The primary structure comprises 234 residues: HTH-type transcriptional repressor FabR (234 aa).

The HTH tetR-type domain maps to 29–89 (KTRRSLVEAA…TMVDESGLML (61 aa)). Residues 52–71 (SLREVAREAGIAPTSFYRHF) constitute a DNA-binding region (H-T-H motif).

As to quaternary structure, homodimer.

The protein localises to the cytoplasm. Its activity is regulated as follows. Has been suggested to require either an unsaturated acyl carrier protein or unsaturated acyl-CoA (but not their saturated equivalents) for DNA-binding. Another group suggests that unsaturated thioesters are not essential but act instead to enhance DNA-binding. In terms of biological role, binds the promoter region of at least fabA and fabB, but probably not yqfA. Represses the transcription of fabA and fabB, involved in unsaturated fatty acid (UFA) biosynthesis. By controlling UFA production, FabR directly influences the physical properties of the membrane bilayer. This chain is HTH-type transcriptional repressor FabR, found in Escherichia coli (strain K12).